A 484-amino-acid polypeptide reads, in one-letter code: MANNSSYGENVRRKSHTPSAIVIGSGFAGIAAANALRNASFEVVLLESRDRIGGRIHTDYSFGFPVDLGASWLHGVCEENPLAPIIGRLGLPLYRTSGDDSVLFDHDLESYALYDTKGHQVPQELVEKIGKVFETILEETGKLREETKEDISIAKAIAIVMERNPHLRQEGIAHDVLQWYLCRMEGWFATDADAISLQGWDQEVLLPGGHGLMVRGYRPVINTLAKGLDIRLGHRVVEIVRHRNRVEVTVSSGKTFVADAAVIAVPLGVLKANTIKFEPRLPEWKEEAIRELSVGVENKIILHFSEVFWPNVEFLGVVSSTTYGCSYFLNLHKATGHPVLVYMPAGRLACDIEKLSDEAAAQFAFSQLKKILPNAAEPIHYLVSHWGSDENTLGSYTFDGVGKPRDLYEKLRIPVDNLFFAGEATSVQYTGTVHGAFSTGLMAAEECRMRVLERFRELDMLEMCHPAMGEQTATVSVPLLISRL.

4 residues coordinate FAD: glutamate 47, arginine 55, valine 236, and glutamate 423. The Microbody targeting signal signature appears at 482–484 (SRL).

This sequence belongs to the flavin monoamine oxidase family. FAD is required as a cofactor. As to expression, widely expressed.

The protein localises to the peroxisome. It carries out the reaction spermine + O2 + H2O = 3-aminopropanal + spermidine + H2O2. The catalysed reaction is N(1)-acetylspermine + O2 + H2O = 3-acetamidopropanal + spermidine + H2O2. It catalyses the reaction norspermine + O2 + H2O = norspermidine + 3-aminopropanal + H2O2. The enzyme catalyses spermidine + O2 + H2O = 3-aminopropanal + putrescine + H2O2. It carries out the reaction thermospermine + O2 + H2O = 3-aminopropanal + spermidine + H2O2. It participates in amine and polyamine degradation; spermine degradation. It functions in the pathway amine and polyamine degradation; spermidine degradation. Functionally, flavoenzyme involved in polyamine back-conversion. Catalyzes the oxidation of the secondary amino group of polyamines, such as spermine, spermidine and their acetyl derivatives. Substrate preference is spermidine &gt; norspermine &gt; thermospermine &gt; N(1)-acetylspermine &gt; spermine. No activity detected when putrescine is used as substrate. Plays an important role in the regulation of polyamine intracellular concentration. This is Polyamine oxidase 3 from Oryza sativa subsp. japonica (Rice).